Reading from the N-terminus, the 482-residue chain is Pancreatic lipase-related protein 2 (482 aa).

The N-terminal stretch at 1 to 30 (MPMDVRGCLFPSVQMLLCWLVSLLLATVGG) is a signal peptide. C34 and C40 are disulfide-bonded. The N-linked (GlcNAc...) asparagine glycan is linked to N92. The interval 106-118 (IHGFIDKGEEGWL) is required for galactolipase activity. Residues C122 and C133 are joined by a disulfide bond. The active-site Nucleophile is the S184. Catalysis depends on D208, which acts as the Charge relay system. Positions 219, 222, 224, and 227 each coordinate Ca(2+). Residues C269 and C293 are joined by a disulfide bond. Residues 270–292 (QKNILSTIVDINGIWEGTRNFAA) are required for galactolipase activity. The active-site Charge relay system is H295. Intrachain disulfides connect C317–C328 and C331–C336. 2 N-linked (GlcNAc...) asparagine glycosylation sites follow: N366 and N441. The PLAT domain maps to 370–482 (WRYKVSVTLS…EDVLQSLYPC (113 aa)). C466 and C482 form a disulfide bridge.

This sequence belongs to the AB hydrolase superfamily. Lipase family. Expressed in acinar cells of pancreas (at protein level).

The protein resides in the secreted. Its subcellular location is the zymogen granule membrane. It localises to the cell projection. The protein localises to the neuron projection. It catalyses the reaction a triacylglycerol + H2O = a diacylglycerol + a fatty acid + H(+). The enzyme catalyses a 1,2-diacyl-3-O-(beta-D-galactosyl)-sn-glycerol + 2 H2O = 3-beta-D-galactosyl-sn-glycerol + 2 a fatty acid + 2 H(+). It carries out the reaction 1,2,3-tri-(9Z-octadecenoyl)-glycerol + H2O = di-(9Z)-octadecenoylglycerol + (9Z)-octadecenoate + H(+). The catalysed reaction is di-(9Z)-octadecenoylglycerol + H2O = (9Z-octadecenoyl)-glycerol + (9Z)-octadecenoate + H(+). It catalyses the reaction (9Z-octadecenoyl)-glycerol + H2O = glycerol + (9Z)-octadecenoate + H(+). The enzyme catalyses 1-(9Z-octadecenoyl)-glycerol + H2O = glycerol + (9Z)-octadecenoate + H(+). It carries out the reaction 1,2,3-tripropanoylglycerol + H2O = dipropanoylglycerol + propanoate + H(+). The catalysed reaction is 1,2,3-tributanoylglycerol + H2O = dibutanoylglycerol + butanoate + H(+). It catalyses the reaction 1,2,3-trioctanoylglycerol + H2O = dioctanoylglycerol + octanoate + H(+). The enzyme catalyses 1,2-didecanoylglycerol + H2O = decanoylglycerol + decanoate + H(+). It carries out the reaction long chain 1,2-diacyl-3-O-beta-D-galactosyl-sn-glycerol + H2O = long chain acyl-3-O-beta-D-galactosyl-sn-glycerol + a fatty acid + H(+). The catalysed reaction is 1,2-dioctanoyl-3-O-beta-D-galactosyl-sn-glycerol + H2O = octanoyl-3-(beta-D-galactosyl)-sn-glycerol + octanoate + H(+). It catalyses the reaction 1,2-didodecanoyl-3-beta-D-galactosyl-sn-glycerol + H2O = dodecanoyl-3-beta-D-galactosyl-sn-glycerol + dodecanoate + H(+). The enzyme catalyses 1-beta-D-galactosyl-2,3-didodecanoyl-sn-glycerol + H2O = 1-beta-D-galactosyl-dodecanoyl-sn-glycerol + dodecanoate + H(+). It carries out the reaction a 1,2-diacyl-3-O-[alpha-D-galactosyl-(1-&gt;6)-beta-D-galactosyl]-sn-glycerol + H2O = acyl-3-O-[alpha-D-galactosyl-(1-&gt;6)-beta-D-galactosyl]-sn-glycerol + a fatty acid + H(+). The catalysed reaction is long chain 1,2-diacyl-3-O-[alpha-D-galactosyl-(1-&gt;6)-beta-D-galactosyl]-sn-glycerol + H2O = long chain acyl-3-O-[alpha-D-galactosyl-(1-&gt;6)-beta-D-galactosyl]-sn-glycerol + a fatty acid + H(+). It catalyses the reaction 1,2-dioctanoyl-3-O-[alpha-D-galactosyl-(1-&gt;6)-beta-D-galactosyl]-sn-glycerol + H2O = octanoyl-3-O-[alpha-D-galactosyl-(1-&gt;6)-beta-D-galactosyl]-sn-glycerol + octanoate + H(+). The enzyme catalyses 1,2-didodecanoyl-3-O-[alpha-D-galactosyl-(1-&gt;6)-beta-D-galactosyl]-sn-glycerol + H2O = dodecanoyl-3-O-[alpha-D-galactosyl-(1-&gt;6)-beta-D-galactosyl]-sn-glycerol + dodecanoate + H(+). It carries out the reaction a 1,2-diacyl-sn-glycero-3-phosphocholine + H2O = a monoacyl-sn-glycero-3-phosphocholine + a fatty acid + H(+). It participates in glycerolipid metabolism; triacylglycerol degradation. The protein operates within glycolipid metabolism. Its activity is regulated as follows. CLPS stimulates triacylglycerol lipase activity. Triacylglycerol lipase activity is not inhibited by increasing bile salt concentration. In terms of biological role, lipase that primarily hydrolyzes triglycerides and galactosylglycerides. In neonates, may play a major role in pancreatic digestion of dietary fats such as milk fat globules enriched in long-chain triglycerides. Hydrolyzes short-, medium- and long-chain fatty acyls in triglycerides without apparent positional specificity. Can completely deacylate triacylglycerols. When the liver matures and bile salt synthesis increases, likely functions mainly as a galactolipase and monoacylglycerol lipase. Hydrolyzes monogalactosyldiglycerols (MGDG) and digalactosyldiacylglycerols (DGDG) present in a plant-based diet, releasing long-chain polyunsaturated fatty acids. Hydrolyzes medium- and long-chain fatty acyls in galactolipids. May act together with LIPF to hydrolyze partially digested triglycerides. Hydrolyzes long-chain monoglycerides with high efficiency. In cytotoxic T cells, contributes to perforin-dependent cell lysis, but is unlikely to mediate direct cytotoxicity. Also has low phospholipase activity. In neurons, required for the localization of the phospholipid 1-oleoyl-2-palmitoyl-PC (OPPC) to neurite tips through acyl chain remodeling of membrane phospholipids. The resulting OPPC-rich lipid membrane domain recruits the t-SNARE protein STX4 by selectively interacting with the STX4 transmembrane domain and this promotes surface expression of the dopamine transporter SLC6A3/DAT at neurite tips by facilitating fusion of SLC6A3-containing transport vesicles with the plasma membrane. This chain is Pancreatic lipase-related protein 2, found in Mus musculus (Mouse).